The sequence spans 351 residues: Glycerol-1-phosphate dehydrogenase [NAD(P)+] (351 aa).

NAD(+)-binding positions include 97 to 101 and 119 to 122; these read GKTID and TAPS. Asp-124 contacts substrate. Position 128 (Ser-128) interacts with NAD(+). Residue Asp-171 coordinates substrate. Zn(2+)-binding residues include Asp-171 and His-251. Substrate is bound at residue His-255. Residue His-267 participates in Zn(2+) binding.

Belongs to the glycerol-1-phosphate dehydrogenase family. As to quaternary structure, homodimer. Zn(2+) is required as a cofactor.

The protein localises to the cytoplasm. The catalysed reaction is sn-glycerol 1-phosphate + NAD(+) = dihydroxyacetone phosphate + NADH + H(+). It carries out the reaction sn-glycerol 1-phosphate + NADP(+) = dihydroxyacetone phosphate + NADPH + H(+). Its pathway is membrane lipid metabolism; glycerophospholipid metabolism. In terms of biological role, catalyzes the NAD(P)H-dependent reduction of dihydroxyacetonephosphate (DHAP or glycerone phosphate) to glycerol 1-phosphate (G1P). The G1P thus generated is used as the glycerophosphate backbone of phospholipids in the cellular membranes of Archaea. This is Glycerol-1-phosphate dehydrogenase [NAD(P)+] from Metallosphaera sedula (strain ATCC 51363 / DSM 5348 / JCM 9185 / NBRC 15509 / TH2).